The following is a 453-amino-acid chain: SH2 domain-containing protein 4A (453 aa).

A coiled-coil region spans residues 96–127 (EIIAEQARREAEKEAEQLRKKQEVELSQLSTL). Residues 280-301 (AVKRPPIPPKPKLPPSANNSSI) are disordered. Over residues 284–293 (PPIPPKPKLP) the composition is skewed to pro residues. An SH2 domain is found at 347-439 (WFHGIISRQE…LGRELLRFPC (93 aa)).

It is found in the cytoplasm. Its function is as follows. Inhibits estrogen-induced cell proliferation. This is SH2 domain-containing protein 4A (sh2d4a) from Xenopus tropicalis (Western clawed frog).